Here is an 88-residue protein sequence, read N- to C-terminus: Acylphosphatase (88 aa).

One can recognise an Acylphosphatase-like domain in the interval Ala-3–Gly-88. Residues Arg-18 and Asn-36 contribute to the active site.

It belongs to the acylphosphatase family.

It catalyses the reaction an acyl phosphate + H2O = a carboxylate + phosphate + H(+). This chain is Acylphosphatase (acyP), found in Xanthomonas euvesicatoria pv. vesicatoria (strain 85-10) (Xanthomonas campestris pv. vesicatoria).